A 105-amino-acid chain; its full sequence is Cell division protein FtsB (105 aa).

Residues 1-3 are Cytoplasmic-facing; it reads MKP. The chain crosses the membrane as a helical span at residues 4–21; the sequence is FVLVLFALLALLQYRLWF. Over 22-105 the chain is Periplasmic; it reads GENSLTEYFT…RSSEQSQDNQ (84 aa). Positions 38–75 form a coiled coil; sequence HQQSGNAELLERNEVLKEEIQDLKSGTEALEERARNEL.

It belongs to the FtsB family. In terms of assembly, part of a complex composed of FtsB, FtsL and FtsQ.

The protein localises to the cell inner membrane. Functionally, essential cell division protein. May link together the upstream cell division proteins, which are predominantly cytoplasmic, with the downstream cell division proteins, which are predominantly periplasmic. This Shewanella amazonensis (strain ATCC BAA-1098 / SB2B) protein is Cell division protein FtsB.